The sequence spans 382 residues: Pyrimidine monooxygenase RutA (382 aa).

FMN-binding positions include 68-69 (IK), Asn-134, Glu-143, 159-160 (RY), and Ser-209.

Belongs to the NtaA/SnaA/DszA monooxygenase family. RutA subfamily.

The catalysed reaction is uracil + FMNH2 + NADH + O2 = (Z)-3-ureidoacrylate + FMN + NAD(+) + H2O + H(+). It catalyses the reaction thymine + FMNH2 + NADH + O2 = (Z)-2-methylureidoacrylate + FMN + NAD(+) + H2O + H(+). In terms of biological role, catalyzes the pyrimidine ring opening between N-3 and C-4 by an unusual flavin hydroperoxide-catalyzed mechanism, adding oxygen atoms in the process to yield ureidoacrylate peracid, that immediately reacts with FMN forming ureidoacrylate and FMN-N(5)-oxide. The FMN-N(5)-oxide reacts spontaneously with NADH to produce FMN. Requires the flavin reductase RutF to regenerate FMN in vivo. This is Pyrimidine monooxygenase RutA from Escherichia coli O81 (strain ED1a).